An 89-amino-acid chain; its full sequence is MANHKSAEKRIRQTIKRTERNRFYKTKVKNIIKAVREAVAINDVAKAQERLKIANKELHKFVSKGILKKNTASRKVSRLNASVKKIALA.

Belongs to the bacterial ribosomal protein bS20 family.

Binds directly to 16S ribosomal RNA. The protein is Small ribosomal subunit protein bS20 of Helicobacter pylori (strain P12).